We begin with the raw amino-acid sequence, 219 residues long: U-scoloptoxin(11)-Sm7a (219 aa).

The N-terminal stretch at 1 to 15 (MYLFLMINYFVLANS) is a signal peptide.

It belongs to the scoloptoxin-11 family. Contains 8 disulfide bonds. Expressed by the venom gland.

It is found in the secreted. This is U-scoloptoxin(11)-Sm7a from Scolopendra morsitans (Tanzanian blue ringleg centipede).